The following is a 236-amino-acid chain: Ubiquinone biosynthesis O-methyltransferase (236 aa).

4 residues coordinate S-adenosyl-L-methionine: Arg-39, Gly-59, Asp-80, and Met-124.

The protein belongs to the methyltransferase superfamily. UbiG/COQ3 family.

The catalysed reaction is a 3-demethylubiquinol + S-adenosyl-L-methionine = a ubiquinol + S-adenosyl-L-homocysteine + H(+). It carries out the reaction a 3-(all-trans-polyprenyl)benzene-1,2-diol + S-adenosyl-L-methionine = a 2-methoxy-6-(all-trans-polyprenyl)phenol + S-adenosyl-L-homocysteine + H(+). It functions in the pathway cofactor biosynthesis; ubiquinone biosynthesis. In terms of biological role, O-methyltransferase that catalyzes the 2 O-methylation steps in the ubiquinone biosynthetic pathway. This is Ubiquinone biosynthesis O-methyltransferase from Shewanella pealeana (strain ATCC 700345 / ANG-SQ1).